Here is a 215-residue protein sequence, read N- to C-terminus: Vesicle-trafficking protein SEC22b (215 aa).

Residues 1-194 (MVLLTMIARV…KYLNMRSTYA (194 aa)) lie on the Cytoplasmic side of the membrane. A Longin domain is found at 6 to 119 (MIARVADGLP…YSFIEFDTFI (114 aa)). At Lys-38 the chain carries N6-acetyllysine. The v-SNARE coiled-coil homology domain maps to 134 to 194 (NLGSINTELQ…KYLNMRSTYA (61 aa)). Phosphoserine is present on Ser-137. Thr-140 carries the phosphothreonine modification. 4 positions are modified to phosphoserine: Ser-164, Ser-168, Ser-174, and Ser-177. Residues 195 to 215 (KLAAVAVFFIMLIVYVRFWWL) traverse the membrane as a helical; Anchor for type IV membrane protein segment.

It belongs to the synaptobrevin family. In terms of assembly, interacts with STX17. Component of two distinct SNARE complexes consisting of STX5, GOSR2/BOS1, BET1 and SEC22B or STX18, USE1L, BNIP1/SEC20L and SEC22B. YKT6 can probably replace SEC22B as subunit of either complex. Interacts with the COPII Sec23/24 complex composed of SEC23A and SEC24A; recruits SEC22B into COPII-coated vesicles to allow its transport from the endoplasmic reticulum to the Golgi. Interacts with BET1.

Its subcellular location is the endoplasmic reticulum membrane. The protein localises to the endoplasmic reticulum-Golgi intermediate compartment membrane. It is found in the golgi apparatus. The protein resides in the cis-Golgi network membrane. It localises to the trans-Golgi network membrane. Its subcellular location is the melanosome. Its function is as follows. SNARE involved in targeting and fusion of ER-derived transport vesicles with the Golgi complex as well as Golgi-derived retrograde transport vesicles with the ER. This chain is Vesicle-trafficking protein SEC22b (Sec22b), found in Cricetulus griseus (Chinese hamster).